We begin with the raw amino-acid sequence, 427 residues long: Beta-porphyranase D (427 aa).

Residues 1–19 (MILKQAILTLVLVNANLFA) form the signal peptide. The disordered stretch occupies residues 23–45 (PKTYSSTDKETRQGPPKPPMGKR). In terms of domain architecture, GH16 spans 32 to 308 (ETRQGPPKPP…WVRAYRLVDV (277 aa)). Residues Trp73, Arg76, Glu168, Glu173, and Glu272 each coordinate substrate. The active-site Nucleophile is Glu168. The active-site Proton donor is Glu173.

This sequence belongs to the glycosyl hydrolase 16 family.

It localises to the periplasm. The enzyme catalyses Hydrolysis of beta-D-galactopyranose-(1-&gt;4)-alpha-L-galactopyranose-6-sulfate linkages in porphyran.. In terms of biological role, cleaves the sulfated polysaccharide porphyran at the (1-&gt;4) linkages between beta-D-galactopyranose and alpha-L-galactopyranose-6-sulfate, forming mostly the disaccharide alpha-L-galactopyranose-6-sulfate-(1-&gt;3)-beta-D-galactose. The sequence is that of Beta-porphyranase D (porD) from Zobellia galactanivorans (strain DSM 12802 / CCUG 47099 / CIP 106680 / NCIMB 13871 / Dsij).